The following is a 137-amino-acid chain: Small ribosomal subunit protein bS6 (137 aa).

A disordered region spans residues 104–137 (SLVNKANNKPEPKPTKAKKEDVAPEAKEQAQTEA). Residues 111–137 (NKPEPKPTKAKKEDVAPEAKEQAQTEA) are compositionally biased toward basic and acidic residues.

Belongs to the bacterial ribosomal protein bS6 family.

Functionally, binds together with bS18 to 16S ribosomal RNA. In Helicobacter hepaticus (strain ATCC 51449 / 3B1), this protein is Small ribosomal subunit protein bS6.